The chain runs to 439 residues: Acetyl esterase Axe7A (439 aa).

Residues 1–31 (MFNFAPKQTTEMKKLLFTLVFVLGSMATALA) form the signal peptide. S309 (nucleophile) is an active-site residue. Active-site charge relay system residues include D391 and H420.

The protein belongs to the carbohydrate esterase 7 family.

The protein operates within glycan degradation; xylan degradation. In terms of biological role, involved in degradation of plant cell wall polysaccharides. Has acetyl esterase activity towards a broad range of substrates including xylose-tetraacetate, 4-O-methylumbelliferyl acetate, glucose-pentaacetate, cephalosporin C, and acetylated xylo-oligosaccharides smaller than xylo-heptaose. Displays no detectable activity on polymeric acetylated xylan. This chain is Acetyl esterase Axe7A, found in Xylanibacter ruminicola (strain ATCC 19189 / DSM 19721 / CIP 105475 / JCM 8958 / 23) (Prevotella ruminicola).